The primary structure comprises 270 residues: MAVKAGQRRPWRSLLQRGVDTAGDLADLVAQKISVAIDPRARLLRRRRRALRWGLVFTAGCLLWGLVTALLAAWGWFTSLLVITGTIAVTQAIPATLLLLRYRWLRSEPLPVRRPASVRRLPPPGSAARPAMSALGASERGFFSLLGVMERGAMLPADEIRDLTAAANQTSAAMVATAAEVVSMERAVQCSAASRSYLVPTINAFTAQLSTGVRQYNEMVTAAAQLVSSANGAGGAGPGQQRYREELAGATDRLVAWAQAFDELGGLPRR.

2 helical membrane passes run 50–72 (ALRW…ALLA) and 77–99 (FTSL…TLLL).

In terms of assembly, interacts with PspA and Rv2742c.

It localises to the membrane. In terms of biological role, involved in preservation of envelope integrity and tolerance to surface stress. Reverses the inhibitory effect of PspA on ClgR activity. Facilitates intracellular growth of M.tuberculosis. This chain is Putative envelope-preserving system protein Rv2743c, found in Mycobacterium tuberculosis (strain ATCC 25618 / H37Rv).